The chain runs to 296 residues: MSILIDEKTPILVQGITGDKGTFHAKEMIAYGSNVVGGVTPGKGGKTHCGVPVFNTVKEAVEATGATTSITFVAPPFAADAIMEAADAGLKLVCSITDGIPAQDMMRVKRYLRRYPKEKRTMVVGPNCAGIISPGKSMLGIMPGHIYLPGKVGVISRSGTLGYEAAAQMKELGIGISTSVGIGGDPINGSSFLDHLALFEQDPETEAVLMIGEIGGPQEAEASAWIKENFSKPVIGFVAGLTAPKGRRMGHAGAIISATGDSAAEKAEIMRSYGLTVAPDPGSFGSTVADVLARAA.

CoA is bound by residues 17-20 (TGDK), lysine 43, and 96-98 (ITD). The active-site Tele-phosphohistidine intermediate is the histidine 251.

This sequence belongs to the succinate/malate CoA ligase alpha subunit family. As to quaternary structure, heterotetramer of two alpha and two beta subunits.

It carries out the reaction (S)-malate + ATP + CoA = (S)-malyl-CoA + ADP + phosphate. The protein operates within one-carbon metabolism; formaldehyde assimilation via serine pathway. This Methylorubrum extorquens (strain ATCC 14718 / DSM 1338 / JCM 2805 / NCIMB 9133 / AM1) (Methylobacterium extorquens) protein is Malate--CoA ligase subunit alpha (mtkB).